A 311-amino-acid polypeptide reads, in one-letter code: tRNA dimethylallyltransferase (311 aa).

10–17 (GPTAVGKT) is an ATP binding site. Residue 12–17 (TAVGKT) participates in substrate binding. The segment at 35–38 (DSMQ) is interaction with substrate tRNA.

This sequence belongs to the IPP transferase family. As to quaternary structure, monomer. The cofactor is Mg(2+).

The catalysed reaction is adenosine(37) in tRNA + dimethylallyl diphosphate = N(6)-dimethylallyladenosine(37) in tRNA + diphosphate. Catalyzes the transfer of a dimethylallyl group onto the adenine at position 37 in tRNAs that read codons beginning with uridine, leading to the formation of N6-(dimethylallyl)adenosine (i(6)A). This is tRNA dimethylallyltransferase from Anoxybacillus flavithermus (strain DSM 21510 / WK1).